The chain runs to 389 residues: Ecto-ADP-ribosyltransferase 3 (389 aa).

An N-terminal signal peptide occupies residues 1-26; it reads MKTGHFEIVTMLLATMILVDIFQVKA. A disulfide bridge connects residues Cys43 and Cys256. The region spanning 64–251 is the TR mART core domain; sequence QQLDTVWENA…LILQSINKTC (188 aa). Tyr101 and Arg163 together coordinate NAD(+). N-linked (GlcNAc...) asparagine glycosylation is present at Asn248. 3 consecutive repeat copies span residues 283 to 292, 293 to 302, and 303 to 312. Residues 283–312 form a 3 X 10 AA tandem repeats of [GS]-E-K-N-[QW]-K-L-E-D-H region; the sequence is GEKNQKLEDHSEKNWKLEDHGEKNQKLEDH. A disordered region spans residues 325–362; that stretch reads MKIPEPFPLPEDKSQGNINNPTPGPVPVPGPKSHPSAS. Residue Thr346 is glycosylated (O-linked (GalNAc...) threonine). A compositionally biased stretch (pro residues) spans 346–356; that stretch reads TPGPVPVPGPK. Ser362 is lipidated: GPI-anchor amidated serine. Residues 363–389 constitute a propeptide, removed in mature form; sequence SGKLLLPQFGMVIILISVSAINLFVAL.

This sequence belongs to the Arg-specific ADP-ribosyltransferase family. Post-translationally, O-glycosylated with core 1 or possibly core 8 glycans. In terms of tissue distribution, testis specific.

Its subcellular location is the cell membrane. The enzyme catalyses L-arginyl-[protein] + NAD(+) = N(omega)-(ADP-D-ribosyl)-L-arginyl-[protein] + nicotinamide + H(+). This chain is Ecto-ADP-ribosyltransferase 3 (ART3), found in Homo sapiens (Human).